A 392-amino-acid chain; its full sequence is tRNA (guanine-N(7)-)-methyltransferase (392 aa).

S-adenosyl-L-methionine contacts are provided by Glu-123, Glu-148, and Asp-175. Positions 201 and 231 each coordinate substrate.

It belongs to the class I-like SAM-binding methyltransferase superfamily. TrmB family.

The enzyme catalyses guanosine(46) in tRNA + S-adenosyl-L-methionine = N(7)-methylguanosine(46) in tRNA + S-adenosyl-L-homocysteine. The protein operates within tRNA modification; N(7)-methylguanine-tRNA biosynthesis. In terms of biological role, catalyzes the formation of N(7)-methylguanine at position 46 (m7G46) in tRNA. In Campylobacter jejuni (strain RM1221), this protein is tRNA (guanine-N(7)-)-methyltransferase.